Reading from the N-terminus, the 319-residue chain is Ataxin-3 homolog (319 aa).

Residues 8 to 179 (ISSIFFERQQ…NSEADDFITL (172 aa)) enclose the Josephin domain. Cysteine 21 serves as the catalytic Nucleophile. Histidine 118 acts as the Proton acceptor in catalysis. Asparagine 133 is a catalytic residue. UIM domains are found at residues 218–237 (QEDRDLAIAMALSMESKESS) and 242–261 (SDEDQLAKAIEMSLSQDPNI). The disordered stretch occupies residues 253–319 (MSLSQDPNIP…EKKSQNVPEE (67 aa)). The segment covering 254-267 (SLSQDPNIPSTSAA) has biased composition (polar residues). A compositionally biased stretch (basic and acidic residues) spans 295–313 (QQRRDRAKFLEKLEEEKKS). Positions 297–300 (RRDR) are interaction with cdc-48.1 and cdc-48.2.

In terms of assembly, forms a complex composed of deubiquitinating enzyme atx-3, adapter ubxn-5 and cdc-48.1. Forms a complex composed of deubiquitinating enzyme atx-3, E4 ubiquitin-protein ligase ufd-2 and cdc-48.1. Interacts (via RRDR motif) with cdc-48.1 (via N-terminus) and cdc-48.2 (via N-terminus); the interaction with cdc-48.1 is not required for atx-3 enzymatic activity. Interacts (via C-terminus) with ubxn-5. May interact with ned-8.

It localises to the cytoplasm. The protein localises to the nucleus. The protein resides in the nucleolus. It catalyses the reaction Thiol-dependent hydrolysis of ester, thioester, amide, peptide and isopeptide bonds formed by the C-terminal Gly of ubiquitin (a 76-residue protein attached to proteins as an intracellular targeting signal).. Functionally, acts as a chain editing deubiquitinating enzyme that binds and cleaves 'Lys-48'-linked polyubiquitin chains, with a preference for chains containing four or more ubiquitin molecules thereby modulating protein degradation by the ubiquitin-proteasome pathway. Probably by regulating the IGF-1-insulin-like pathway, regulates lifespan. Regulates germline DNA double-strand-break repair and apoptosis in response to DNA damage by recruiting E4 ubiquitin-protein ligase ufd-2 to DNA repair foci. Interacts with key regulators of transcription and represses transcription. Acts as a histone-binding protein that regulates transcription. The protein is Ataxin-3 homolog of Caenorhabditis briggsae.